The chain runs to 737 residues: Amyloid-beta A4 protein (737 aa).

The N-terminal stretch at 1 to 18 (MGETTAFVLLLVATLTRS) is a signal peptide. The Extracellular segment spans residues 19-668 (SEIPADDTVG…ADDVGSNKGA (650 aa)). A GFLD subdomain region spans residues 29–124 (LLTEPQVAMF…PYRCLVGEFV (96 aa)). Residues 29-190 (LLTEPQVAMF…RGVKFVCCPA (162 aa)) enclose the E1 domain. 6 cysteine pairs are disulfide-bonded: cysteine 39–cysteine 63, cysteine 74–cysteine 118, cysteine 99–cysteine 106, cysteine 134–cysteine 188, cysteine 145–cysteine 175, and cysteine 159–cysteine 187. The interval 132–190 (DKCKFLHQERMNQCESHLHWHTVAKESCGDRSMNLHDYGMLLPCGIDRFRGVKFVCCPA) is cuBD subdomain. Positions 148, 152, and 169 each coordinate Cu cation. Acidic residues-rich tracts occupy residues 193–207 (EQET…EESD) and 242–262 (GDGD…EQES). The disordered stretch occupies residues 193-280 (EQETDSSEVE…MTTTTTTTTE (88 aa)). Residues 286-344 (VRAVCWAQAESGPCRAMLERWYFNPKKRRCVPFLFGGCGGNRNNFESEEYCLAVCSSSL) form the BPTI/Kunitz inhibitor domain. 3 disulfide bridges follow: cysteine 290–cysteine 340, cysteine 299–cysteine 323, and cysteine 315–cysteine 336. The 192-residue stretch at 354 to 545 (AVDQYFEAPG…SEIQNQIYPA (192 aa)) folds into the E2 domain. Asparagine 522 is a glycosylation site (N-linked (GlcNAc...) asparagine). Residues 669–689 (IIGLMVGGVVIATVIVITLVM) traverse the membrane as a helical segment. Topologically, residues 690 to 737 (LRKKQYTSIHHGVIEVDAAVTPEERHLARMQQNGYENPTYKFFEQMQN) are cytoplasmic. Residues 724–729 (YENPTY) carry the YENPXY motif motif. The interval 726–729 (NPTY) is clathrin-binding.

Belongs to the APP family.

Its subcellular location is the membrane. Its function is as follows. Functional neuronal receptor which couples to intracellular signaling pathway through the GTP-binding protein G(O). The sequence is that of Amyloid-beta A4 protein (app) from Takifugu rubripes (Japanese pufferfish).